The sequence spans 496 residues: Serine/threonine-protein kinase Sgk3 (496 aa).

The region spanning 12–124 (SCPSVSIPSS…AFLQMDSPRH (113 aa)) is the PX domain. The disordered stretch occupies residues 121 to 157 (SPRHQSDPSEDEDERSTSKPHSTSRNINLGPTGNPHA). Phosphoserine occurs at positions 126 and 129. Positions 139-151 (KPHSTSRNINLGP) are enriched in polar residues. A Protein kinase domain is found at 162–419 (FDFLKVIGKG…FLEIQNHPFF (258 aa)). Residues 168–176 (IGKGSFGKV) and Lys191 contribute to the ATP site. The Nuclear localization signal motif lies at 195-205 (KKIVLNRKEQK). Residue Asp286 is the Proton acceptor of the active site. The residue at position 320 (Thr320) is a Phosphothreonine; by PDPK1. Positions 420–496 (ESLSWTDLVQ…YAPPSEDLFL (77 aa)) constitute an AGC-kinase C-terminal domain. Ser486 carries the phosphoserine modification.

The protein belongs to the protein kinase superfamily. AGC Ser/Thr protein kinase family. Interacts with GSK3B and FLII. Interacts with PDPK1 in a phosphorylation-dependent manner. Activated by phosphorylation on Ser-486 by an unknown kinase (may be mTORC2 but not confirmed), transforming it into a substrate for PDPK1 which then phosphorylates it on Thr-320. As to expression, widely expressed, predominantly in the heart, spleen and 7-day embryo.

It localises to the cytoplasmic vesicle. It is found in the early endosome. The protein localises to the recycling endosome. The catalysed reaction is L-seryl-[protein] + ATP = O-phospho-L-seryl-[protein] + ADP + H(+). The enzyme catalyses L-threonyl-[protein] + ATP = O-phospho-L-threonyl-[protein] + ADP + H(+). With respect to regulation, two specific sites, one in the kinase domain (Thr-320) and the other in the C-terminal regulatory region (Ser-486), need to be phosphorylated for its full activation. Functionally, serine/threonine-protein kinase which is involved in the regulation of a wide variety of ion channels, membrane transporters, cell growth, proliferation, survival and migration. Up-regulates Na(+) channels: SCNN1A/ENAC and SCN5A, K(+) channels: KCNA3/KV1.3, KCNE1, KCNQ1 and KCNH2/HERG, epithelial Ca(2+) channels: TRPV5 and TRPV6, chloride channel: BSND, creatine transporter: SLC6A8, Na(+)/dicarboxylate cotransporter: SLC13A2/NADC1, Na(+)-dependent phosphate cotransporter: SLC34A2/NAPI-2B, amino acid transporters: SLC1A5/ASCT2 and SLC6A19, glutamate transporters: SLC1A3/EAAT1, SLC1A6/EAAT4 and SLC1A7/EAAT5, glutamate receptors: GRIA1/GLUR1 and GRIK2/GLUR6, Na(+)/H(+) exchanger: SLC9A3/NHE3, and the Na(+)/K(+) ATPase. Plays a role in the regulation of renal tubular phosphate transport and bone density. Phosphorylates NEDD4L and GSK3B. Positively regulates ER transcription activity through phosphorylation of FLII. Negatively regulates the function of ITCH/AIP4 via its phosphorylation and thereby prevents CXCR4 from being efficiently sorted to lysosomes. The polypeptide is Serine/threonine-protein kinase Sgk3 (Sgk3) (Mus musculus (Mouse)).